A 193-amino-acid polypeptide reads, in one-letter code: Molybdopterin synthase catalytic subunit (193 aa).

Substrate is bound by residues 118–119 (HR), K134, and 141–143 (KKE). The interval 159–193 (DRTTTDGTTASSPAPATRPAKGGGCCGSKVRANES) is disordered. The segment covering 163-178 (TDGTTASSPAPATRPA) has biased composition (low complexity).

This sequence belongs to the MoaE family. MOCS2B subfamily. As to quaternary structure, heterotetramer; composed of 2 small (MOCS2A) and 2 large (MOCS2B) subunits.

The protein localises to the cytoplasm. It carries out the reaction 2 [molybdopterin-synthase sulfur-carrier protein]-C-terminal-Gly-aminoethanethioate + cyclic pyranopterin phosphate + H2O = molybdopterin + 2 [molybdopterin-synthase sulfur-carrier protein]-C-terminal Gly-Gly + 2 H(+). It functions in the pathway cofactor biosynthesis; molybdopterin biosynthesis. Functionally, catalytic subunit of the molybdopterin synthase complex, a complex that catalyzes the conversion of precursor Z into molybdopterin. Acts by mediating the incorporation of 2 sulfur atoms from thiocarboxylated MOCS2A into precursor Z to generate a dithiolene group. This is Molybdopterin synthase catalytic subunit from Oryza sativa subsp. indica (Rice).